Reading from the N-terminus, the 499-residue chain is UDP-N-acetylmuramoylalanine--D-glutamate ligase (499 aa).

ATP is bound at residue 129–135; it reads GTNGKTT.

This sequence belongs to the MurCDEF family.

The protein localises to the cytoplasm. The catalysed reaction is UDP-N-acetyl-alpha-D-muramoyl-L-alanine + D-glutamate + ATP = UDP-N-acetyl-alpha-D-muramoyl-L-alanyl-D-glutamate + ADP + phosphate + H(+). It functions in the pathway cell wall biogenesis; peptidoglycan biosynthesis. Functionally, cell wall formation. Catalyzes the addition of glutamate to the nucleotide precursor UDP-N-acetylmuramoyl-L-alanine (UMA). The chain is UDP-N-acetylmuramoylalanine--D-glutamate ligase from Ralstonia nicotianae (strain ATCC BAA-1114 / GMI1000) (Ralstonia solanacearum).